We begin with the raw amino-acid sequence, 149 residues long: FAD synthase (149 aa).

ATP is bound by residues 15-16, 20-23, and aspartate 101; these read VF and HVGH.

The protein belongs to the archaeal FAD synthase family. Homodimer. A divalent metal cation serves as cofactor.

The enzyme catalyses FMN + ATP + H(+) = FAD + diphosphate. It functions in the pathway cofactor biosynthesis; FAD biosynthesis; FAD from FMN: step 1/1. Catalyzes the transfer of the AMP portion of ATP to flavin mononucleotide (FMN) to produce flavin adenine dinucleotide (FAD) coenzyme. In Thermococcus kodakarensis (strain ATCC BAA-918 / JCM 12380 / KOD1) (Pyrococcus kodakaraensis (strain KOD1)), this protein is FAD synthase.